The following is a 514-amino-acid chain: Peptide chain release factor 3 (514 aa).

Residues 8-268 form the tr-type G domain; that stretch reads KKRRTFAIIS…TFLEFAPEPH (261 aa). GTP is bound by residues 17-24, 85-89, and 139-142; these read SHPDAGKT, DTPGH, and NKLD.

This sequence belongs to the TRAFAC class translation factor GTPase superfamily. Classic translation factor GTPase family. PrfC subfamily.

Its subcellular location is the cytoplasm. In terms of biological role, increases the formation of ribosomal termination complexes and stimulates activities of RF-1 and RF-2. It binds guanine nucleotides and has strong preference for UGA stop codons. It may interact directly with the ribosome. The stimulation of RF-1 and RF-2 is significantly reduced by GTP and GDP, but not by GMP. This is Peptide chain release factor 3 from Streptococcus pyogenes serotype M1.